The chain runs to 300 residues: Geranylgeranyl diphosphate synthase (300 aa).

The isopentenyl diphosphate site is built by Lys-50, Arg-53, and His-82. Mg(2+) is bound by residues Asp-89 and Asp-95. Arg-100 serves as a coordination point for (2E,6E)-farnesyl diphosphate. Position 101 (Arg-101) interacts with isopentenyl diphosphate. Residues Lys-186, Thr-187, and Gln-224 each contribute to the (2E,6E)-farnesyl diphosphate site.

This sequence belongs to the FPP/GGPP synthase family. Requires Mg(2+) as cofactor.

Its subcellular location is the plastid. It is found in the cyanelle. The enzyme catalyses isopentenyl diphosphate + (2E,6E)-farnesyl diphosphate = (2E,6E,10E)-geranylgeranyl diphosphate + diphosphate. Its pathway is isoprenoid biosynthesis; geranylgeranyl diphosphate biosynthesis; geranylgeranyl diphosphate from farnesyl diphosphate and isopentenyl diphosphate: step 1/1. Functionally, catalyzes the condensation of farnesyl diphosphate (FPP) and isopentenyl diphosphate (IPP) to yield geranylgeranyl diphosphate (GGPP) needed for biosynthesis of carotenoids and diterpenes. This Cyanophora paradoxa protein is Geranylgeranyl diphosphate synthase (crtE).